A 252-amino-acid chain; its full sequence is 2-succinyl-6-hydroxy-2,4-cyclohexadiene-1-carboxylate synthase (252 aa).

It belongs to the AB hydrolase superfamily. MenH family. Monomer.

The enzyme catalyses 5-enolpyruvoyl-6-hydroxy-2-succinyl-cyclohex-3-ene-1-carboxylate = (1R,6R)-6-hydroxy-2-succinyl-cyclohexa-2,4-diene-1-carboxylate + pyruvate. The protein operates within quinol/quinone metabolism; 1,4-dihydroxy-2-naphthoate biosynthesis; 1,4-dihydroxy-2-naphthoate from chorismate: step 3/7. It functions in the pathway quinol/quinone metabolism; menaquinone biosynthesis. Catalyzes a proton abstraction reaction that results in 2,5-elimination of pyruvate from 2-succinyl-5-enolpyruvyl-6-hydroxy-3-cyclohexene-1-carboxylate (SEPHCHC) and the formation of 2-succinyl-6-hydroxy-2,4-cyclohexadiene-1-carboxylate (SHCHC). This chain is 2-succinyl-6-hydroxy-2,4-cyclohexadiene-1-carboxylate synthase, found in Salmonella agona (strain SL483).